The chain runs to 128 residues: 3-aminoacrylate deaminase RutC (128 aa).

The protein belongs to the RutC family. Homotrimer.

The catalysed reaction is (Z)-3-aminoacrylate + H2O + H(+) = 3-oxopropanoate + NH4(+). Involved in pyrimidine catabolism. Catalyzes the deamination of 3-aminoacrylate to malonic semialdehyde, a reaction that can also occur spontaneously. RutC may facilitate the reaction and modulate the metabolic fitness, rather than catalyzing essential functions. The protein is 3-aminoacrylate deaminase RutC of Escherichia coli O103:H2 (strain 12009 / EHEC).